We begin with the raw amino-acid sequence, 309 residues long: Ribosomal RNA small subunit methyltransferase H (309 aa).

Residues 33 to 35 (GGH), Asp53, Phe79, Asp100, and Gln107 contribute to the S-adenosyl-L-methionine site.

This sequence belongs to the methyltransferase superfamily. RsmH family.

The protein localises to the cytoplasm. The enzyme catalyses cytidine(1402) in 16S rRNA + S-adenosyl-L-methionine = N(4)-methylcytidine(1402) in 16S rRNA + S-adenosyl-L-homocysteine + H(+). Specifically methylates the N4 position of cytidine in position 1402 (C1402) of 16S rRNA. In Clostridium kluyveri (strain NBRC 12016), this protein is Ribosomal RNA small subunit methyltransferase H.